The primary structure comprises 110 residues: uncharacterized protein (110 aa).

This is an uncharacterized protein from Mycobacterium tuberculosis (strain CDC 1551 / Oshkosh).